A 618-amino-acid chain; its full sequence is DNA mismatch repair protein MutL (618 aa).

This sequence belongs to the DNA mismatch repair MutL/HexB family.

This protein is involved in the repair of mismatches in DNA. It is required for dam-dependent methyl-directed DNA mismatch repair. May act as a 'molecular matchmaker', a protein that promotes the formation of a stable complex between two or more DNA-binding proteins in an ATP-dependent manner without itself being part of a final effector complex. This Porphyromonas gingivalis (strain ATCC BAA-308 / W83) protein is DNA mismatch repair protein MutL.